The sequence spans 430 residues: Glutamate-1-semialdehyde 2,1-aminomutase (430 aa).

Lys265 is subject to N6-(pyridoxal phosphate)lysine.

It belongs to the class-III pyridoxal-phosphate-dependent aminotransferase family. HemL subfamily. Homodimer. The cofactor is pyridoxal 5'-phosphate.

The protein resides in the cytoplasm. The enzyme catalyses (S)-4-amino-5-oxopentanoate = 5-aminolevulinate. The protein operates within porphyrin-containing compound metabolism; protoporphyrin-IX biosynthesis; 5-aminolevulinate from L-glutamyl-tRNA(Glu): step 2/2. The protein is Glutamate-1-semialdehyde 2,1-aminomutase of Shewanella putrefaciens (strain CN-32 / ATCC BAA-453).